The following is a 482-amino-acid chain: Glucose starvation modulator protein 1 (482 aa).

The segment at residues 20–48 (CVFCHEKHLQCDVGRPCQNCEKRNIGESC) is a DNA-binding region (zn(2)-C6 fungal-type). A PAS domain is found at 350-422 (LLEYENMSKM…KLFNEYLAFS (73 aa)).

It belongs to the ERT1/acuK family.

It is found in the nucleus. Transcription factor which regulates nonfermentable carbon utilization. The protein is Glucose starvation modulator protein 1 (GSM1) of Eremothecium gossypii (strain ATCC 10895 / CBS 109.51 / FGSC 9923 / NRRL Y-1056) (Yeast).